The sequence spans 340 residues: Uroporphyrinogen decarboxylase (340 aa).

Substrate is bound by residues 21 to 25 (RQAGR), Phe40, Asp71, Tyr148, Ser203, and His316.

Belongs to the uroporphyrinogen decarboxylase family. As to quaternary structure, homodimer.

It is found in the cytoplasm. The enzyme catalyses uroporphyrinogen III + 4 H(+) = coproporphyrinogen III + 4 CO2. The protein operates within porphyrin-containing compound metabolism; protoporphyrin-IX biosynthesis; coproporphyrinogen-III from 5-aminolevulinate: step 4/4. Catalyzes the decarboxylation of four acetate groups of uroporphyrinogen-III to yield coproporphyrinogen-III. The polypeptide is Uroporphyrinogen decarboxylase (Campylobacter jejuni subsp. jejuni serotype O:2 (strain ATCC 700819 / NCTC 11168)).